A 635-amino-acid chain; its full sequence is 1-deoxy-D-xylulose-5-phosphate synthase (635 aa).

Thiamine diphosphate contacts are provided by residues histidine 73 and 114 to 116; that span reads SHA. Residue aspartate 146 coordinates Mg(2+). Thiamine diphosphate is bound by residues 147-148, asparagine 176, tyrosine 287, and glutamate 368; that span reads GA. Asparagine 176 contributes to the Mg(2+) binding site.

The protein belongs to the transketolase family. DXPS subfamily. As to quaternary structure, homodimer. Mg(2+) is required as a cofactor. It depends on thiamine diphosphate as a cofactor.

The catalysed reaction is D-glyceraldehyde 3-phosphate + pyruvate + H(+) = 1-deoxy-D-xylulose 5-phosphate + CO2. Its pathway is metabolic intermediate biosynthesis; 1-deoxy-D-xylulose 5-phosphate biosynthesis; 1-deoxy-D-xylulose 5-phosphate from D-glyceraldehyde 3-phosphate and pyruvate: step 1/1. In terms of biological role, catalyzes the acyloin condensation reaction between C atoms 2 and 3 of pyruvate and glyceraldehyde 3-phosphate to yield 1-deoxy-D-xylulose-5-phosphate (DXP). The sequence is that of 1-deoxy-D-xylulose-5-phosphate synthase from Corynebacterium diphtheriae (strain ATCC 700971 / NCTC 13129 / Biotype gravis).